A 165-amino-acid chain; its full sequence is Protein SprT (165 aa).

The SprT-like domain maps to 20-163; the sequence is EKLAQANLKL…RCVHCGEQLV (144 aa). Position 78 (His-78) interacts with Zn(2+). Residue Glu-79 is part of the active site. Position 82 (His-82) interacts with Zn(2+).

The protein belongs to the SprT family. It depends on Zn(2+) as a cofactor.

It is found in the cytoplasm. This chain is Protein SprT, found in Escherichia coli O127:H6 (strain E2348/69 / EPEC).